Reading from the N-terminus, the 529-residue chain is UDP-glucuronosyltransferase 2B1 (529 aa).

Positions methionine 1 to cysteine 23 are cleaved as a signal peptide. N-linked (GlcNAc...) asparagine glycans are attached at residues asparagine 134 and asparagine 316. The helical transmembrane segment at valine 494 to threonine 510 threads the bilayer.

This sequence belongs to the UDP-glycosyltransferase family.

The protein resides in the endoplasmic reticulum membrane. The catalysed reaction is glucuronate acceptor + UDP-alpha-D-glucuronate = acceptor beta-D-glucuronoside + UDP + H(+). The enzyme catalyses 17beta-estradiol + UDP-alpha-D-glucuronate = 17beta-estradiol 17-O-(beta-D-glucuronate) + UDP + H(+). Functionally, UDP-glucuronosyltransferase (UGT) that catalyzes phase II biotransformation reactions in which lipophilic substrates are conjugated with glucuronic acid to increase the metabolite's water solubility, thereby facilitating excretion into either the urine or bile. Essential for the elimination and detoxification of drugs, xenobiotics and endogenous compounds. Catalyzes the glucuronidation of the endogenous estrogen hormone estradiol. This chain is UDP-glucuronosyltransferase 2B1, found in Rattus norvegicus (Rat).